Consider the following 760-residue polypeptide: DNA-directed RNA polymerase subunit beta' (760 aa).

4 residues coordinate Zn(2+): Cys-76, Cys-78, Cys-90, and Cys-93. Residues Asp-594, Asp-596, and Asp-598 each contribute to the Mg(2+) site.

This sequence belongs to the RNA polymerase beta' chain family. RpoC1 subfamily. In terms of assembly, in plastids the minimal PEP RNA polymerase catalytic core is composed of four subunits: alpha, beta, beta', and beta''. When a (nuclear-encoded) sigma factor is associated with the core the holoenzyme is formed, which can initiate transcription. Mg(2+) is required as a cofactor. It depends on Zn(2+) as a cofactor.

The protein localises to the plastid. The protein resides in the chloroplast. The enzyme catalyses RNA(n) + a ribonucleoside 5'-triphosphate = RNA(n+1) + diphosphate. Its function is as follows. DNA-dependent RNA polymerase catalyzes the transcription of DNA into RNA using the four ribonucleoside triphosphates as substrates. This is DNA-directed RNA polymerase subunit beta' from Bigelowiella natans (Pedinomonas minutissima).